A 324-amino-acid polypeptide reads, in one-letter code: Bile salt hydrolase/transferase (324 aa).

Cysteine 2 functions as the Nucleophile; acyl-thioester intermediate in the catalytic mechanism. Deoxycholate is bound by residues cysteine 2 and arginine 16. Asparagine 79 is a binding site for taurine.

This sequence belongs to the peptidase C59 family. As to quaternary structure, homotetramer. The tetramer consists of a dimer of dimers.

The enzyme catalyses glycocholate + H2O = cholate + glycine. It catalyses the reaction glycodeoxycholate + H2O = deoxycholate + glycine. It carries out the reaction chenodeoxycholate + glycine = glycochenodeoxycholate + H2O. The catalysed reaction is cholate + taurine = taurocholate + H2O. The enzyme catalyses taurodeoxycholate + H2O = deoxycholate + taurine. It catalyses the reaction taurochenodeoxycholate + H2O = chenodeoxycholate + taurine. It carries out the reaction an L-alpha-amino acid + cholate = an N-choloyl-L-alpha-amino acid + H2O. The catalysed reaction is an L-alpha-amino acid + taurocholate = an N-choloyl-L-alpha-amino acid + taurine. The enzyme catalyses glycocholate + an L-alpha-amino acid = an N-choloyl-L-alpha-amino acid + glycine. It functions in the pathway lipid metabolism; bile acid biosynthesis. Possesses dual functions in bile acid metabolism. Acts as a bile salt hydrolase that catalyzes the deconjugation of glycine- and taurine-linked bile salts, which occurs naturally in the intestines of animals, releasing amino acid residues and deconjugated bile salts (bile acids). Can hydrolyze the amide bond in the bile salts glycocholate (GCA), glycodeoxycholate (GDCA), glycochenodeoxycholate (GCDCA), taurocholate (TCA), taurodeoxycholate (TDCA) and taurochenodeoxycholate (TCDCA). Shows a preference for glycine-conjugated bile acids as substrates. Also acts as an amine N-acyltransferase that conjugates a wide variety of amino acids to conjugated and non-conjugated bile acids, thus producing bacterial bile acid amidates (BBAAs) - also named microbially conjugated bile acids (MCBAs) - in the gastrointestinal tract. These BBAAs may facilitate communication between the microbiota and host through the activation of host ligand-activated transcription factors. This is Bile salt hydrolase/transferase from Lactiplantibacillus plantarum (strain ATCC BAA-793 / NCIMB 8826 / WCFS1) (Lactobacillus plantarum).